A 302-amino-acid polypeptide reads, in one-letter code: tRNA-cytidine(32) 2-sulfurtransferase (302 aa).

The PP-loop motif motif lies at 44–49; sequence SGGKDS. Residues Cys119, Cys122, and Cys210 each coordinate [4Fe-4S] cluster.

Belongs to the TtcA family. Homodimer. Requires Mg(2+) as cofactor. [4Fe-4S] cluster is required as a cofactor.

The protein localises to the cytoplasm. The catalysed reaction is cytidine(32) in tRNA + S-sulfanyl-L-cysteinyl-[cysteine desulfurase] + AH2 + ATP = 2-thiocytidine(32) in tRNA + L-cysteinyl-[cysteine desulfurase] + A + AMP + diphosphate + H(+). The protein operates within tRNA modification. Catalyzes the ATP-dependent 2-thiolation of cytidine in position 32 of tRNA, to form 2-thiocytidine (s(2)C32). The sulfur atoms are provided by the cysteine/cysteine desulfurase (IscS) system. The chain is tRNA-cytidine(32) 2-sulfurtransferase from Teredinibacter turnerae (strain ATCC 39867 / T7901).